A 299-amino-acid chain; its full sequence is Neomycin C epimerase (299 aa).

The region spanning proline 10–arginine 222 is the Radical SAM core domain. Cysteine 26, cysteine 30, cysteine 33, cysteine 226, and cysteine 247 together coordinate [4Fe-4S] cluster. Cysteine 249 acts as the Proton donor in catalysis. [4Fe-4S] cluster-binding residues include cysteine 271 and cysteine 274.

It belongs to the radical SAM superfamily. Requires [4Fe-4S] cluster as cofactor.

The catalysed reaction is neomycin C + AH2 + S-adenosyl-L-methionine = neomycin B + 5'-deoxyadenosine + L-methionine + A + H(+). It participates in antibiotic biosynthesis; neomycin biosynthesis. In terms of biological role, catalyzes the last step of neomycin B biosynthesis, i.e. the irreversible epimerization at C-5''' of neomycin C to give neomycin B. To a lesser extent, is also able to convert neomycin Y2 to neomycin Y1. This is Neomycin C epimerase from Streptomyces fradiae (Streptomyces roseoflavus).